We begin with the raw amino-acid sequence, 632 residues long: Basic helix-loop-helix ARNT-like protein 1 (632 aa).

The interval Met1–Arg39 is disordered. Phosphoserine; by GSK3-beta is present on Ser17. The residue at position 21 (Thr21) is a Phosphothreonine; by GSK3-beta. The Nuclear localization signal motif lies at Asn36–Gly41. A bHLH domain is found at Asn79–Leu132. Ser85 bears the Phosphoserine mark. The residue at position 97 (Ser97) is a Phosphoserine; by CK2. The Nuclear export signal 1 motif lies at Leu149 to Leu159. A PAS 1 domain is found at Ser150 to Pro222. A Glycyl lysine isopeptide (Lys-Gly) (interchain with G-Cter in SUMO2 and SUMO3) cross-link involves residue Lys259. Residue Lys266 forms a Glycyl lysine isopeptide (Lys-Gly) (interchain with G-Cter in SUMO); alternate linkage. A Glycyl lysine isopeptide (Lys-Gly) (interchain with G-Cter in SUMO2); alternate cross-link involves residue Lys266. Residues Gln333–Glu403 enclose the PAS 2 domain. Positions Leu367–Leu375 match the Nuclear export signal 2 motif. The 44-residue stretch at Asn408–Val451 folds into the PAC domain. Disordered regions lie at residues Pro465 to Ala498 and Gly517 to Asn601. An interaction with CIART region spans residues Arg514 to Gln594. A compositionally biased stretch (low complexity) spans Gly517 to Pro527. Lys544 is subject to N6-acetyllysine.

Component of the circadian clock oscillator which includes the CRY1/2 proteins, CLOCK or NPAS2, BMAL1 or BMAL2, CSNK1D and/or CSNK1E, TIMELESS and the PER1/2/3 proteins. Forms a heterodimer with CLOCK. The CLOCK-BMAL1 heterodimer is required for E-box-dependent transactivation, for CLOCK nuclear translocation and degradation, and, for phosphorylation of both CLOCK and BMAL1. Part of a nuclear complex which also includes RACK1 and PRKCA; RACK1 and PRKCA are recruited to the complex in a circadian manner. Interacts with NPAS2. Interacts with EZH2. Interacts with SUMO3. Interacts with SIRT1. Interacts with AHR. Interacts with ID1, ID2 and ID3. Interacts with DDX4. Interacts with OGT. Interacts with EED and SUZ12. Interacts with MTA1. Interacts with CIART. Interacts with HSP90. Interacts with KAT2B and EP300. Interacts with BHLHE40/DEC1 and BHLHE41/DEC2. Interacts with RELB and the interaction is enhanced in the presence of CLOCK. Interacts with PER1, PER2, CRY1 and CRY2 and this interaction requires a translocation to the nucleus. Interaction of the CLOCK-BMAL1 heterodimer with PER or CRY inhibits transcription activation. Interaction of the CLOCK-BMAL1 with CRY1 is independent of DNA but with PER2 is off DNA. The CLOCK-BMAL1 heterodimer interacts with GSK3B. Interacts with KDM5A. Interacts with KMT2A; in a circadian manner. Interacts with UBE3A. Interacts with PRKCG. Interacts with MAGEL2. Interacts with NCOA2. Interacts with THRAP3. The CLOCK-BMAL1 heterodimer interacts with PASD1. Interacts with PASD1. Interacts with USP9X. Interacts with PIWIL2 (via PIWI domain). Interacts with HDAC3. Interacts with HNF4A. In terms of processing, ubiquitinated, leading to its proteasomal degradation. Deubiquitinated by USP9X. O-glycosylated; contains O-GlcNAc. O-glycosylation by OGT prevents protein degradation by inhibiting ubiquitination. It also stabilizes the CLOCK-BMAL1 heterodimer thereby increasing CLOCK-BMAL1-mediated transcription of genes in the negative loop of the circadian clock such as PER1/2/3 and CRY1/2. Post-translationally, acetylated on Lys-544 by CLOCK during the repression phase of the circadian cycle. Acetylation facilitates recruitment of CRY1 protein and initiates the repression phase of the circadian cycle. Acetylated at Lys-544 by KAT5 during the activation phase of the cycle, leading to recruitment of the positive transcription elongation factor b (P-TEFb) and BRD4, followed by productive elongation of circadian transcripts. Deacetylated by SIRT1, which may result in decreased protein stability. In terms of processing, phosphorylated upon dimerization with CLOCK. Phosphorylation enhances the transcriptional activity, alters the subcellular localization and decreases the stability of the CLOCK-BMAL1 heterodimer by promoting its degradation. Phosphorylation shows circadian variations in the liver with a peak between CT10 to CT14. Phosphorylation at Ser-97 by CK2 is essential for its nuclear localization, its interaction with CLOCK and controls CLOCK nuclear entry. Dephosphorylation at Ser-85 is important for dimerization with CLOCK and transcriptional activity. Sumoylated on Lys-266 upon dimerization with CLOCK. Predominantly conjugated to poly-SUMO2/3 rather than SUMO1 and the level of these conjugates undergo rhythmic variation, peaking at CT9-CT12. Sumoylation localizes it exclusively to the PML body and promotes its ubiquitination in the PML body, ubiquitin-dependent proteasomal degradation and the transcriptional activity of the CLOCK-BMAL1 heterodimer. Post-translationally, undergoes lysosome-mediated degradation in a time-dependent manner in the liver. In terms of tissue distribution, expressed in liver and testis (at protein level). Expressed in the suprachiasmatic nucleus (SCN) in a circadian manner.

The protein localises to the nucleus. The protein resides in the cytoplasm. It is found in the PML body. With respect to regulation, the redox state of the cell can modulate the transcriptional activity of the CLOCK-BMAL1 and NPAS2-BMAL1 heterodimers; NADH and NADPH enhance the DNA-binding activity of the heterodimers. Functionally, transcriptional activator which forms a core component of the circadian clock. The circadian clock, an internal time-keeping system, regulates various physiological processes through the generation of approximately 24 hour circadian rhythms in gene expression, which are translated into rhythms in metabolism and behavior. It is derived from the Latin roots 'circa' (about) and 'diem' (day) and acts as an important regulator of a wide array of physiological functions including metabolism, sleep, body temperature, blood pressure, endocrine, immune, cardiovascular, and renal function. Consists of two major components: the central clock, residing in the suprachiasmatic nucleus (SCN) of the brain, and the peripheral clocks that are present in nearly every tissue and organ system. Both the central and peripheral clocks can be reset by environmental cues, also known as Zeitgebers (German for 'timegivers'). The predominant Zeitgeber for the central clock is light, which is sensed by retina and signals directly to the SCN. The central clock entrains the peripheral clocks through neuronal and hormonal signals, body temperature and feeding-related cues, aligning all clocks with the external light/dark cycle. Circadian rhythms allow an organism to achieve temporal homeostasis with its environment at the molecular level by regulating gene expression to create a peak of protein expression once every 24 hours to control when a particular physiological process is most active with respect to the solar day. Transcription and translation of core clock components (CLOCK, NPAS2, BMAL1, BMAL2, PER1, PER2, PER3, CRY1 and CRY2) plays a critical role in rhythm generation, whereas delays imposed by post-translational modifications (PTMs) are important for determining the period (tau) of the rhythms (tau refers to the period of a rhythm and is the length, in time, of one complete cycle). A diurnal rhythm is synchronized with the day/night cycle, while the ultradian and infradian rhythms have a period shorter and longer than 24 hours, respectively. Disruptions in the circadian rhythms contribute to the pathology of cardiovascular diseases, cancer, metabolic syndromes and aging. A transcription/translation feedback loop (TTFL) forms the core of the molecular circadian clock mechanism. Transcription factors, CLOCK or NPAS2 and BMAL1 or BMAL2, form the positive limb of the feedback loop, act in the form of a heterodimer and activate the transcription of core clock genes and clock-controlled genes (involved in key metabolic processes), harboring E-box elements (5'-CACGTG-3') within their promoters. The core clock genes: PER1/2/3 and CRY1/2 which are transcriptional repressors form the negative limb of the feedback loop and interact with the CLOCK|NPAS2-BMAL1|BMAL2 heterodimer inhibiting its activity and thereby negatively regulating their own expression. This heterodimer also activates nuclear receptors NR1D1/2 and RORA/B/G, which form a second feedback loop and which activate and repress BMAL1 transcription, respectively. BMAL1 positively regulates myogenesis and negatively regulates adipogenesis via the transcriptional control of the genes of the canonical Wnt signaling pathway. Plays a role in normal pancreatic beta-cell function; regulates glucose-stimulated insulin secretion via the regulation of antioxidant genes NFE2L2/NRF2 and its targets SESN2, PRDX3, CCLC and CCLM. Negatively regulates the mTORC1 signaling pathway; regulates the expression of MTOR and DEPTOR. Controls diurnal oscillations of Ly6C inflammatory monocytes; rhythmic recruitment of the PRC2 complex imparts diurnal variation to chemokine expression that is necessary to sustain Ly6C monocyte rhythms. Regulates the expression of HSD3B2, STAR, PTGS2, CYP11A1, CYP19A1 and LHCGR in the ovary and also the genes involved in hair growth. Plays an important role in adult hippocampal neurogenesis by regulating the timely entry of neural stem/progenitor cells (NSPCs) into the cell cycle and the number of cell divisions that take place prior to cell-cycle exit. Regulates the circadian expression of CIART and KLF11. The CLOCK-BMAL1 heterodimer regulates the circadian expression of SERPINE1/PAI1, VWF, B3, CCRN4L/NOC, NAMPT, DBP, MYOD1, PPARGC1A, PPARGC1B, SIRT1, GYS2, F7, NGFR, GNRHR, BHLHE40/DEC1, ATF4, MTA1, KLF10 and also genes implicated in glucose and lipid metabolism. Promotes rhythmic chromatin opening, regulating the DNA accessibility of other transcription factors. May play a role in spermatogenesis; contributes to the chromatoid body assembly and physiology. The NPAS2-BMAL1 heterodimer positively regulates the expression of MAOA, F7 and LDHA and modulates the circadian rhythm of daytime contrast sensitivity by regulating the rhythmic expression of adenylate cyclase type 1 (ADCY1) in the retina. The preferred binding motif for the CLOCK-BMAL1 heterodimer is 5'-CACGTGA-3', which contains a flanking adenine nucleotide at the 3-prime end of the canonical 6-nucleotide E-box sequence. CLOCK specifically binds to the half-site 5'-CAC-3', while BMAL1 binds to the half-site 5'-GTGA-3'. The CLOCK-BMAL1 heterodimer also recognizes the non-canonical E-box motifs 5'-AACGTGA-3' and 5'-CATGTGA-3'. Essential for the rhythmic interaction of CLOCK with ASS1 and plays a critical role in positively regulating CLOCK-mediated acetylation of ASS1. Plays a role in protecting against lethal sepsis by limiting the expression of immune checkpoint protein CD274 in macrophages in a PKM2-dependent manner. Regulates the diurnal rhythms of skeletal muscle metabolism via transcriptional activation of genes promoting triglyceride synthesis (DGAT2) and metabolic efficiency (COQ10B). This is Basic helix-loop-helix ARNT-like protein 1 (Bmal1) from Mus musculus (Mouse).